The chain runs to 136 residues: Mini-ribonuclease 3 (136 aa).

D20 is an active-site residue.

It belongs to the MrnC RNase family. In terms of assembly, homodimer. It depends on Mg(2+) as a cofactor.

The protein resides in the cytoplasm. Its function is as follows. Involved in correct processing of both the 5' and 3' ends of 23S rRNA precursor. Processes 30S rRNA precursor transcript even in absence of ribonuclease 3 (Rnc); Rnc processes 30S rRNA into smaller rRNA precursors. This Listeria monocytogenes serovar 1/2a (strain ATCC BAA-679 / EGD-e) protein is Mini-ribonuclease 3.